The sequence spans 225 residues: NAD(P)H-hydrate epimerase (225 aa).

The YjeF N-terminal domain occupies 9–209; it reads MQTIDNYTVE…DIGLLTPQDF (201 aa). 57-61 is a (6S)-NADPHX binding site; the sequence is NNGAD. K(+)-binding residues include Asn58 and Asp119. (6S)-NADPHX is bound by residues 123–129 and Asp152; that span reads GTGLNNL. K(+) is bound at residue Thr155.

Belongs to the NnrE/AIBP family. Requires K(+) as cofactor.

The catalysed reaction is (6R)-NADHX = (6S)-NADHX. It catalyses the reaction (6R)-NADPHX = (6S)-NADPHX. Catalyzes the epimerization of the S- and R-forms of NAD(P)HX, a damaged form of NAD(P)H that is a result of enzymatic or heat-dependent hydration. This is a prerequisite for the S-specific NAD(P)H-hydrate dehydratase to allow the repair of both epimers of NAD(P)HX. The polypeptide is NAD(P)H-hydrate epimerase (Leuconostoc kimchii (strain IMSNU 11154 / KCTC 2386 / IH25)).